Consider the following 229-residue polypeptide: MAAILARKSLSALRSRQLVLAGHTIEGTNGYNRTLLGTRSFATKHSFSTDKDDEEREQLAKELSKDWNSVFERSINTLFLTEMVRGLMLTLKYFFEKKVTINYPFEKGPLSPRFRGEHALRRYATGEERCIACKLCEAICPAQAITIEAEEREDGSRRTTRYDIDMTKCIYCGFCQEACPVDAIVEGPNFEFATETHEELLYDKEKLLENGDRWETEIAENLRSESLYR.

Residues 1–41 (MAAILARKSLSALRSRQLVLAGHTIEGTNGYNRTLLGTRSF) constitute a mitochondrion transit peptide. 2 consecutive 4Fe-4S ferredoxin-type domains span residues 121–150 (RRYA…IEAE) and 160–189 (TRYD…EGPN). Positions 130, 133, 136, 140, 169, 172, 175, and 179 each coordinate [4Fe-4S] cluster.

The protein belongs to the complex I 23 kDa subunit family. Complex I is composed of about 45 different subunits. This is a component of the iron-sulfur (IP) fragment of the enzyme. [4Fe-4S] cluster is required as a cofactor. Lowest expression found in storage tissues of tubers. Higher expression in older leaves than younger ones. Highest expression found in flowers.

The protein resides in the mitochondrion inner membrane. It carries out the reaction a ubiquinone + NADH + 5 H(+)(in) = a ubiquinol + NAD(+) + 4 H(+)(out). In terms of biological role, core subunit of the mitochondrial membrane respiratory chain NADH dehydrogenase (Complex I) that is believed to belong to the minimal assembly required for catalysis. Complex I functions in the transfer of electrons from NADH to the respiratory chain. The immediate electron acceptor for the enzyme is believed to be ubiquinone. May donate electrons to ubiquinone. The sequence is that of NADH dehydrogenase [ubiquinone] iron-sulfur protein 8, mitochondrial from Solanum tuberosum (Potato).